Reading from the N-terminus, the 136-residue chain is Secreted RxLR effector protein 15 (136 aa).

Residues Met1–Ala22 form the signal peptide. The RxLR signature appears at Arg47–Arg50.

It belongs to the RxLR effector family.

The protein resides in the secreted. The protein localises to the host nucleus. It is found in the host cytoplasm. Its function is as follows. Effector that completely suppresses the host cell death induced by cell death-inducing proteins. The protein is Secreted RxLR effector protein 15 of Plasmopara viticola (Downy mildew of grapevine).